We begin with the raw amino-acid sequence, 199 residues long: MYETYHSGWIECITGSMFSGKSEELIRRLRRGIYAKQKVVVFKPAIDDRYHKEKVVSHDGNELEAINISTSRDILLQDLSHVDVIGIDEIQFFDKEIVNIVEKLAENGHRVVVAGLDMDFRGEPFEPMPQIMAVSEQVTKLQAVCAVCGSSSSRTQRLIDGQPAKVDDPIILVGANESYEPRCRAHHIVAPSTSDEEEM.

ATP is bound by residues 15–22 and 88–91; these read GSMFSGKS and DEIQ. Glutamate 89 functions as the Proton acceptor in the catalytic mechanism. Residues cysteine 145, cysteine 148, cysteine 183, and histidine 186 each coordinate Zn(2+).

This sequence belongs to the thymidine kinase family. As to quaternary structure, homotetramer.

Its subcellular location is the cytoplasm. The catalysed reaction is thymidine + ATP = dTMP + ADP + H(+). The sequence is that of Thymidine kinase from Staphylococcus haemolyticus (strain JCSC1435).